A 157-amino-acid chain; its full sequence is Pyruvoyl-dependent arginine decarboxylase 2 (157 aa).

Pyruvic acid (Ser) is present on S43.

Belongs to the PdaD family. It depends on pyruvate as a cofactor.

It carries out the reaction L-arginine + H(+) = agmatine + CO2. The chain is Pyruvoyl-dependent arginine decarboxylase 2 (pdaD2) from Archaeoglobus fulgidus (strain ATCC 49558 / DSM 4304 / JCM 9628 / NBRC 100126 / VC-16).